A 550-amino-acid chain; its full sequence is Formate--tetrahydrofolate ligase (550 aa).

62–69 (TPAGEGKS) serves as a coordination point for ATP.

The protein belongs to the formate--tetrahydrofolate ligase family.

It carries out the reaction (6S)-5,6,7,8-tetrahydrofolate + formate + ATP = (6R)-10-formyltetrahydrofolate + ADP + phosphate. Its pathway is one-carbon metabolism; tetrahydrofolate interconversion. The protein is Formate--tetrahydrofolate ligase of Corynebacterium diphtheriae (strain ATCC 700971 / NCTC 13129 / Biotype gravis).